We begin with the raw amino-acid sequence, 459 residues long: U1 small nuclear ribonucleoprotein 70 kDa (459 aa).

Residues 99–178 (KTIFVSRISY…RRIVVDIERG (80 aa)) enclose the RRM domain. The tract at residues 185–459 (KPRKFGGGLG…YSMISNENGF (275 aa)) is disordered. A compositionally biased stretch (basic and acidic residues) spans 211-241 (EMSESREKEKEREKEKEKEKERMEKMKKRDG). Positions 242–254 (GLSSNGNRSNGIS) are enriched in low complexity. Basic and acidic residues predominate over residues 263–408 (DRGDRGDRDR…IDERRRDQRD (146 aa)). Positions 426-440 (QHHHHQQNHQSHHNQ) are enriched in basic residues.

Its subcellular location is the nucleus. Its function is as follows. Mediates the splicing of pre-mRNA by binding to the stem loop I region of U1-snRNA. The protein is U1 small nuclear ribonucleoprotein 70 kDa (snrnp70) of Dictyostelium discoideum (Social amoeba).